A 907-amino-acid chain; its full sequence is Alanine--tRNA ligase (907 aa).

Positions 581, 585, 683, and 687 each coordinate Zn(2+).

It belongs to the class-II aminoacyl-tRNA synthetase family. Zn(2+) is required as a cofactor.

Its subcellular location is the cytoplasm. It catalyses the reaction tRNA(Ala) + L-alanine + ATP = L-alanyl-tRNA(Ala) + AMP + diphosphate. Its function is as follows. Catalyzes the attachment of alanine to tRNA(Ala) in a two-step reaction: alanine is first activated by ATP to form Ala-AMP and then transferred to the acceptor end of tRNA(Ala). Also edits incorrectly charged Ser-tRNA(Ala) and Gly-tRNA(Ala) via its editing domain. The chain is Alanine--tRNA ligase from Bdellovibrio bacteriovorus (strain ATCC 15356 / DSM 50701 / NCIMB 9529 / HD100).